Consider the following 311-residue polypeptide: Aspartate carbamoyltransferase catalytic subunit (311 aa).

Carbamoyl phosphate-binding residues include Arg-58 and Thr-59. L-aspartate is bound at residue Lys-86. Arg-108, His-136, and Gln-139 together coordinate carbamoyl phosphate. Residues Arg-169 and Arg-224 each coordinate L-aspartate. Gly-265 and Pro-266 together coordinate carbamoyl phosphate.

The protein belongs to the aspartate/ornithine carbamoyltransferase superfamily. ATCase family. Heterododecamer (2C3:3R2) of six catalytic PyrB chains organized as two trimers (C3), and six regulatory PyrI chains organized as three dimers (R2).

It carries out the reaction carbamoyl phosphate + L-aspartate = N-carbamoyl-L-aspartate + phosphate + H(+). The protein operates within pyrimidine metabolism; UMP biosynthesis via de novo pathway; (S)-dihydroorotate from bicarbonate: step 2/3. Functionally, catalyzes the condensation of carbamoyl phosphate and aspartate to form carbamoyl aspartate and inorganic phosphate, the committed step in the de novo pyrimidine nucleotide biosynthesis pathway. In Geotalea uraniireducens (strain Rf4) (Geobacter uraniireducens), this protein is Aspartate carbamoyltransferase catalytic subunit.